The following is a 210-amino-acid chain: MTIGLVGRKVGMTRIFTEDGVSIPVTVIEVEANRVTQVKSVETDGYNAIQVTTGAKKASRVTKPEAGHFAKAGVEAGRGLWEFRLNNGETFTVGSELKVDLLADVKMVDVTGTSKGKGFAGTVKRHNFRTQDMTHGNSLSHRAPGSIGQNQTPGRVFKGKKMAGHMGAERVTTQNLELVRVDAERNLLLIKGAVPGATNGNVIVKPAVKA.

Residues 134–153 form a disordered region; that stretch reads THGNSLSHRAPGSIGQNQTP. Glutamine 151 carries the N5-methylglutamine modification.

It belongs to the universal ribosomal protein uL3 family. In terms of assembly, part of the 50S ribosomal subunit. Forms a cluster with proteins L14 and L19. In terms of processing, methylated by PrmB.

Its function is as follows. One of the primary rRNA binding proteins, it binds directly near the 3'-end of the 23S rRNA, where it nucleates assembly of the 50S subunit. The chain is Large ribosomal subunit protein uL3 from Aeromonas salmonicida (strain A449).